The chain runs to 594 residues: Aspartate--tRNA(Asp/Asn) ligase (594 aa).

Glu173 serves as a coordination point for L-aspartate. Residues 197–200 (QLFK) are aspartate. Arg219 contacts L-aspartate. ATP contacts are provided by residues 219-221 (RDE) and Gln228. His451 provides a ligand contact to L-aspartate. Residue Glu485 coordinates ATP. Residue Arg492 coordinates L-aspartate. An ATP-binding site is contributed by 537 to 540 (GWDR). The segment at 566–594 (PLTDAPAPITAQQRKESGIDAQPKRVQQA) is disordered.

The protein belongs to the class-II aminoacyl-tRNA synthetase family. Type 1 subfamily. In terms of assembly, homodimer.

The protein resides in the cytoplasm. It catalyses the reaction tRNA(Asx) + L-aspartate + ATP = L-aspartyl-tRNA(Asx) + AMP + diphosphate. Functionally, aspartyl-tRNA synthetase with relaxed tRNA specificity since it is able to aspartylate not only its cognate tRNA(Asp) but also tRNA(Asn). Reaction proceeds in two steps: L-aspartate is first activated by ATP to form Asp-AMP and then transferred to the acceptor end of tRNA(Asp/Asn). This chain is Aspartate--tRNA(Asp/Asn) ligase, found in Mycobacterium tuberculosis (strain CDC 1551 / Oshkosh).